Here is a 414-residue protein sequence, read N- to C-terminus: Esterase FrsA (414 aa).

It belongs to the FrsA family.

It carries out the reaction a carboxylic ester + H2O = an alcohol + a carboxylate + H(+). Functionally, catalyzes the hydrolysis of esters. This Escherichia coli O8 (strain IAI1) protein is Esterase FrsA.